Here is a 183-residue protein sequence, read N- to C-terminus: Globin-like protein 26 (183 aa).

A disordered region spans residues 1–25 (MGSSTSTPAPPPKKNKPEGRKADNQ). Residue Gly-2 is the site of N-myristoyl glycine attachment. The Nuclear localization signal signature appears at 12–18 (PKKNKPE). The region spanning 26 to 166 (ILNSYQKSIV…VVDQLRFGYS (141 aa)) is the Globin domain. The heme site is built by His-77 and His-109.

It belongs to the globin family. As to quaternary structure, homodimer. Occurs in an equilibrium of monomeric and dimeric forms in solution. As to expression, detected in the head mesodermal cell. In the tail region, detected in the stomatointestinal and anal depressor muscle cells.

Its subcellular location is the cytoplasm. It localises to the nucleus lamina. The protein localises to the cell membrane. In terms of biological role, plays a role in electron transport. Utilizes the bis-histidyl hexacoordinated complex with iron to transfer electrons to cytochrome c and molecular oxygen. Plays a regulatory role in the periodicity of the defecation cycle under oxidative stress conditions. Not involved in imparting protection against general conditions of oxidative stress. May participate in redox reactions under anaerobic conditions. The protein is Globin-like protein 26 of Caenorhabditis elegans.